Consider the following 481-residue polypeptide: MLLLPLLLPVLGAGSLNKDPSYSLQVQRQVPVPEGLCVIVSCNLSYPRDGWDESTAAYGYWFKGRTSPKTGAPVATNNQSREVAMSTRDRFQLTGDPGKGSCSLVIRDAQREDEAWYFFRVERGSRVRHSFLSNAFFLKVTALTQKPDVYIPETLEPGQPVTVICVFNWAFKKCPAPSFSWTGAALSPRRTRPSTSHFSVLSFTPSPQDHDTDLTCHVDFSRKGVSAQRTVRLRVASLELQGNVIYLEVQKGQFLRLLCAADSQPPATLSWVLQDRVLSSSHPWGPRTLGLELPGVKAGDSGRYTCRAENRLGSQQRALDLSVQYPPENLRVMVSQANRTVLENLRNGTSLRVLEGQSLRLVCVTHSSPPARLSWTWGEQTVGPSQPSDPGVLQLPRVQMEHEGEFTCHARHPLGSQRVSLSFSVHCKSGPMTGVVLVAVGEVAMKILLLCLCLILLRVRSCRRKAARAALGMEAADAVTD.

The N-terminal stretch at 1-16 (MLLLPLLLPVLGAGSL) is a signal peptide. At 17 to 434 (NKDPSYSLQV…VHCKSGPMTG (418 aa)) the chain is on the extracellular side. An Ig-like V-type domain is found at 19 to 122 (DPSYSLQVQR…DEAWYFFRVE (104 aa)). 4 cysteine pairs are disulfide-bonded: cysteine 37/cysteine 174, cysteine 42/cysteine 102, cysteine 165/cysteine 216, and cysteine 259/cysteine 306. N-linked (GlcNAc...) asparagine glycosylation is found at asparagine 43 and asparagine 78. An N-acetylneuraminate-binding site is contributed by arginine 120. Ig-like C2-type domains follow at residues 147 to 232 (PDVY…RTVR), 238 to 322 (LELQ…LDLS), and 327 to 424 (PENL…LSFS). N-linked (GlcNAc...) asparagine glycans are attached at residues asparagine 338 and asparagine 347. A disulfide bridge connects residues cysteine 363 and cysteine 408. A helical transmembrane segment spans residues 435-455 (VVLVAVGEVAMKILLLCLCLI). Residues 456 to 481 (LLRVRSCRRKAARAALGMEAADAVTD) are Cytoplasmic-facing.

This sequence belongs to the immunoglobulin superfamily. SIGLEC (sialic acid binding Ig-like lectin) family. In terms of tissue distribution, expressed in bone marrow, fetal brain, fetal liver, lung and salivary gland. Detected in brain, macrophage, cancerous esophagus and lung at protein level.

The protein localises to the membrane. In terms of biological role, putative adhesion molecule that mediates sialic-acid dependent binding to cells. This Homo sapiens (Human) protein is Sialic acid-binding Ig-like lectin 16 (SIGLEC16).